The following is a 660-amino-acid chain: PAN2-PAN3 deadenylation complex subunit PAN3 (660 aa).

A C3H1-type zinc finger spans residues S7–K36. 2 disordered regions span residues K36–D60 and S150–A186. Over residues G43–A59 the composition is skewed to low complexity. The PABPC-interacting motif-2 (PAM-2) motif lies at A59 to N79. The span at S150 to T159 shows a compositional bias: polar residues. Positions Q252–S528 are pseudokinase domain. ATP is bound by residues R304, D358 to T365, and S415 to K416. The stretch at R529 to F567 forms a coiled coil. A knob domain region spans residues I568–G660.

Belongs to the protein kinase superfamily. PAN3 family. Homodimer. Forms a heterotrimer with a catalytic subunit PAN2 to form the poly(A)-nuclease (PAN) deadenylation complex. Interacts (via PAM-2 motif) with poly(A)-binding protein PAB1 (via PABC domain), conferring substrate specificity of the enzyme complex.

Its subcellular location is the cytoplasm. Functionally, regulatory subunit of the poly(A)-nuclease (PAN) deadenylation complex, one of two cytoplasmic mRNA deadenylases involved in mRNA turnover. PAN specifically shortens poly(A) tails of RNA and the activity is stimulated by poly(A)-binding protein PAB1. PAN deadenylation is followed by rapid degradation of the shortened mRNA tails by the CCR4-NOT complex. Deadenylated mRNAs are then degraded by two alternative mechanisms, namely exosome-mediated 3'-5' exonucleolytic degradation, or deadenylation-dependent mRNA decaping and subsequent 5'-3' exonucleolytic degradation by XRN1. May also be involved in post-transcriptional maturation of mRNA poly(A) tails. PAN3 acts as a positive regulator for PAN activity, recruiting the catalytic subunit PAN2 to mRNA via its interaction with RNA and with PAB1. In Debaryomyces hansenii (strain ATCC 36239 / CBS 767 / BCRC 21394 / JCM 1990 / NBRC 0083 / IGC 2968) (Yeast), this protein is PAN2-PAN3 deadenylation complex subunit PAN3.